We begin with the raw amino-acid sequence, 320 residues long: MSRKKIVLAGAGQIGGTLAHLAMLHRLGDVTLLDVNANPPKGKALDLSHAAAVEGCDAVLTGTADQADIAGADVVIVTAGVPRRPGVDRDALLAINLPVMESIGTAIGRYCPDAFVICITNPLDAMVWALRRFSGLPPARVVGMGGVLDSARLRSFLAEALGVSVTEVQAMTLGGHGDDMVPLVRQATVGGVPLPALVKMGWITQQAIDDIVQRTRTGGAEVVNLLWTSSAYYAPASAAIAMATSYLGDQKRVFAASAALSGQYGVDGLHVGVPVMIGAGGIEKIIELEFDDEEQRQFTRSVAAVAALVEDCKRLHRGLA.

NAD(+) contacts are provided by residues 10–15 and aspartate 34; that span reads GAGQIG. Arginine 83 and arginine 89 together coordinate substrate. Residues asparagine 96 and 119–121 each bind NAD(+); that span reads ITN. Substrate-binding residues include asparagine 121 and arginine 152. Catalysis depends on histidine 176, which acts as the Proton acceptor.

The protein belongs to the LDH/MDH superfamily. MDH type 3 family.

The enzyme catalyses (S)-malate + NAD(+) = oxaloacetate + NADH + H(+). Functionally, catalyzes the reversible oxidation of malate to oxaloacetate. The chain is Malate dehydrogenase 2 from Rhodopseudomonas palustris (strain BisB18).